A 148-amino-acid polypeptide reads, in one-letter code: UPF0756 membrane protein YeaL (148 aa).

Transmembrane regions (helical) follow at residues 14–34 (ALGFISHNTTVAVSILVLIIV), 51–71 (LSIGIIILTIGVMAPIASGTL), 86–106 (LVAIAVGVIVYWLGGRGVTLM), and 121–141 (VLGVALFRGVPVGPLIAAGLV).

This sequence belongs to the UPF0756 family.

It localises to the cell membrane. This is UPF0756 membrane protein YeaL from Shigella dysenteriae serotype 1 (strain Sd197).